The primary structure comprises 968 residues: RNA polymerase-associated protein RapA (968 aa).

Residues 164–334 (EVGQRHAPRV…FARLRLLDPD (171 aa)) enclose the Helicase ATP-binding domain. Residue 177–184 (DEVGLGKT) participates in ATP binding. The short motif at 280 to 283 (DEAH) is the DEAH box element. The Helicase C-terminal domain occupies 490 to 644 (RVEWLLNYLV…TCPTGRTIYD (155 aa)).

This sequence belongs to the SNF2/RAD54 helicase family. RapA subfamily. In terms of assembly, interacts with the RNAP. Has a higher affinity for the core RNAP than for the holoenzyme. Its ATPase activity is stimulated by binding to RNAP.

Transcription regulator that activates transcription by stimulating RNA polymerase (RNAP) recycling in case of stress conditions such as supercoiled DNA or high salt concentrations. Probably acts by releasing the RNAP, when it is trapped or immobilized on tightly supercoiled DNA. Does not activate transcription on linear DNA. Probably not involved in DNA repair. This is RNA polymerase-associated protein RapA from Yersinia pestis bv. Antiqua (strain Antiqua).